Reading from the N-terminus, the 1227-residue chain is ATP-dependent helicase/nuclease subunit A (1227 aa).

One can recognise a UvrD-like helicase ATP-binding domain in the interval 37–503 (QKRTAEQIEA…ILLKENFRSQ (467 aa)). 58 to 65 (ASAGSGKT) lines the ATP pocket. The UvrD-like helicase C-terminal domain occupies 532–816 (SLVAGSPGQK…QLMTIHKSKG (285 aa)).

It belongs to the helicase family. AddA subfamily. As to quaternary structure, heterodimer of AddA and AddB/RexB. The cofactor is Mg(2+).

The enzyme catalyses Couples ATP hydrolysis with the unwinding of duplex DNA by translocating in the 3'-5' direction.. It carries out the reaction ATP + H2O = ADP + phosphate + H(+). The heterodimer acts as both an ATP-dependent DNA helicase and an ATP-dependent, dual-direction single-stranded exonuclease. Recognizes the chi site generating a DNA molecule suitable for the initiation of homologous recombination. The AddA nuclease domain is required for chi fragment generation; this subunit has the helicase and 3' -&gt; 5' nuclease activities. This chain is ATP-dependent helicase/nuclease subunit A, found in Streptococcus suis (strain 98HAH33).